A 314-amino-acid polypeptide reads, in one-letter code: 4-hydroxy-3-methylbut-2-enyl diphosphate reductase (314 aa).

Residue Cys-12 participates in [4Fe-4S] cluster binding. (2E)-4-hydroxy-3-methylbut-2-enyl diphosphate is bound by residues His-43 and His-81. The dimethylallyl diphosphate site is built by His-43 and His-81. 2 residues coordinate isopentenyl diphosphate: His-43 and His-81. [4Fe-4S] cluster is bound at residue Cys-103. (2E)-4-hydroxy-3-methylbut-2-enyl diphosphate is bound at residue His-131. Position 131 (His-131) interacts with dimethylallyl diphosphate. His-131 serves as a coordination point for isopentenyl diphosphate. Glu-133 acts as the Proton donor in catalysis. Residue Thr-170 coordinates (2E)-4-hydroxy-3-methylbut-2-enyl diphosphate. [4Fe-4S] cluster is bound at residue Cys-198. Residues Ser-226, Asn-228, and Ser-271 each contribute to the (2E)-4-hydroxy-3-methylbut-2-enyl diphosphate site. Positions 226, 228, and 271 each coordinate dimethylallyl diphosphate. Positions 226, 228, and 271 each coordinate isopentenyl diphosphate.

Belongs to the IspH family. The cofactor is [4Fe-4S] cluster.

The enzyme catalyses isopentenyl diphosphate + 2 oxidized [2Fe-2S]-[ferredoxin] + H2O = (2E)-4-hydroxy-3-methylbut-2-enyl diphosphate + 2 reduced [2Fe-2S]-[ferredoxin] + 2 H(+). It catalyses the reaction dimethylallyl diphosphate + 2 oxidized [2Fe-2S]-[ferredoxin] + H2O = (2E)-4-hydroxy-3-methylbut-2-enyl diphosphate + 2 reduced [2Fe-2S]-[ferredoxin] + 2 H(+). It functions in the pathway isoprenoid biosynthesis; dimethylallyl diphosphate biosynthesis; dimethylallyl diphosphate from (2E)-4-hydroxy-3-methylbutenyl diphosphate: step 1/1. The protein operates within isoprenoid biosynthesis; isopentenyl diphosphate biosynthesis via DXP pathway; isopentenyl diphosphate from 1-deoxy-D-xylulose 5-phosphate: step 6/6. In terms of biological role, catalyzes the conversion of 1-hydroxy-2-methyl-2-(E)-butenyl 4-diphosphate (HMBPP) into a mixture of isopentenyl diphosphate (IPP) and dimethylallyl diphosphate (DMAPP). Acts in the terminal step of the DOXP/MEP pathway for isoprenoid precursor biosynthesis. The chain is 4-hydroxy-3-methylbut-2-enyl diphosphate reductase from Halalkalibacterium halodurans (strain ATCC BAA-125 / DSM 18197 / FERM 7344 / JCM 9153 / C-125) (Bacillus halodurans).